The sequence spans 515 residues: AAA ATPase forming ring-shaped complexes (515 aa).

Residues 2 to 49 adopt a coiled-coil conformation; sequence NDHDEETLASLQQANDQLMAKNHALVKALSRATQEMTKTKAQLNQLAG. 240 to 245 serves as a coordination point for ATP; sequence GNGKTL.

Belongs to the AAA ATPase family. Homohexamer. Assembles into a hexameric ring structure.

In Bifidobacterium adolescentis (strain ATCC 15703 / DSM 20083 / NCTC 11814 / E194a), this protein is AAA ATPase forming ring-shaped complexes.